The chain runs to 398 residues: Putative F-box protein At1g67450 (398 aa).

The 55-residue stretch at T2–F56 folds into the F-box domain.

The sequence is that of Putative F-box protein At1g67450 from Arabidopsis thaliana (Mouse-ear cress).